The primary structure comprises 619 residues: Lateral signaling target protein 2 homolog (619 aa).

An FYVE-type zinc finger spans residues D501–I561. Residues C507, C510, C523, C526, C531, C534, C553, and C556 each contribute to the Zn(2+) site. The disordered stretch occupies residues H598 to I619. A compositionally biased stretch (polar residues) spans D603–I619.

The protein belongs to the lst-2 family.

Functionally, negative regulator of epidermal growth factor receptor (EGFR) signaling. In Brugia malayi (Filarial nematode worm), this protein is Lateral signaling target protein 2 homolog.